The primary structure comprises 483 residues: ATP synthase subunit beta (483 aa).

168-175 (GGAGVGKT) is a binding site for ATP.

The protein belongs to the ATPase alpha/beta chains family. F-type ATPases have 2 components, CF(1) - the catalytic core - and CF(0) - the membrane proton channel. CF(1) has five subunits: alpha(3), beta(3), gamma(1), delta(1), epsilon(1). CF(0) has three main subunits: a(1), b(2) and c(9-12). The alpha and beta chains form an alternating ring which encloses part of the gamma chain. CF(1) is attached to CF(0) by a central stalk formed by the gamma and epsilon chains, while a peripheral stalk is formed by the delta and b chains.

It is found in the cell membrane. It carries out the reaction ATP + H2O + 4 H(+)(in) = ADP + phosphate + 5 H(+)(out). Functionally, produces ATP from ADP in the presence of a proton gradient across the membrane. The catalytic sites are hosted primarily by the beta subunits. The chain is ATP synthase subunit beta from Mycobacterium ulcerans (strain Agy99).